The primary structure comprises 535 residues: Pyrichalasin C-18 hydroxylase (535 aa).

Residues Leu-42 to Leu-62 traverse the membrane as a helical segment. Residues Asn-139 and Asn-222 are each glycosylated (N-linked (GlcNAc...) asparagine). Heme is bound at residue Cys-479.

This sequence belongs to the cytochrome P450 family. Requires heme as cofactor.

The protein localises to the membrane. It functions in the pathway mycotoxin biosynthesis. Its function is as follows. Cytochrome P450 monooxygenase; part of the gene cluster that mediates the biosynthesis of the mycotoxin pyrichalasin H, a tyrosine-derived cytochalasan that inhibits the growth of rice seedlings, but also inhibits lymphocyte capping and actin polymerization and alters cell morphology. Pyrichalasin H is indicated as the responsible agent for the genus-specific pathogenicity of M.grisea toward crabgrass. The first step in the pathway is catalyzed by the O-methyltransferase pyiA which methylates free tyrosine to generate the precursor O-methyltyrosine. The hybrid PKS-NRPS pyiS, assisted by the enoyl reductase pyiC, are responsible for fusion of the O-methyltyrosine precursor and the polyketide backbone. The polyketide synthase module (PKS) of pyiS is responsible for the synthesis of the polyketide backbone and the downstream nonribosomal peptide synthetase (NRPS) amidates the carboxyl end of the polyketide with the O-methyltyrosine precursor. As the NRPS A-domain demonstrates substrate tolerance, pyiS can also use phenylalanine, tyrosine and even para-chlorophenylalanine as amino acid precursor, which leads to the production of novel cytochalasans, including halogenated cytochalasans. Because pyiS lacks a designated enoylreductase (ER) domain, the required activity is provided the enoyl reductase pyiC. Reduction by the hydrolyase pyiE leads to 1,5-dihydropyrrolone, which is substrate for dehydration and intra-molecular Diels-Alder cyclization by the Diels-Alderase pyiF to yield the required isoindolone-fused macrocycle. The tailoring cytochrome P450 monooxygenases piyD and piyG catalyze the hydroxylation at C-18 and C-7, respectivily, whereas the short-chain dehydrogenase/reductase pyiH reduces the carbonyl at C-21 in preparation for the transfer of an acetyl group by the acetyltransferase pyiB. These 3 reactions whose order is not clear yet, lead to the production of O-methylpyrichalasin J, a deacetylated pyrichalasin H. Finally, pyiB to converts O-methylpyrichalasin J into the final product pyrichalasin H via acetylation of C-21. This is Pyrichalasin C-18 hydroxylase from Pyricularia grisea (Crabgrass-specific blast fungus).